The following is an 84-amino-acid chain: Fulditoxin (84 aa).

Residues 1–21 (MKTLLLTLVVVTIVCLDLGNS) form the signal peptide. 4 disulfides stabilise this stretch: Cys24-Cys41, Cys34-Cys59, Cys63-Cys71, and Cys72-Cys77. His50 contacts Zn(2+).

Belongs to the three-finger toxin family. Short-chain subfamily. In terms of assembly, homodimer; non-covalently linked. Is able to form a tetramer of dimers in the presence of 2 zinc ions. As to expression, expressed by the venom gland.

The protein localises to the secreted. Functionally, postsynaptic neurotoxin that produces potent, and completely reversible, postsynaptic neuromuscular blockade, as well as broad spectrum inhibition of human muscle and neuronal nicotinic acetylcholine receptors (nAChRs). Inhibition is potent or moderate, depending on the receptor (alpha-1-beta-1-delta-epsilon/CHRNA1-CHRNB1-CHRND-CHRNE (IC(50)=2.56 uM), alpha-4-beta-2/CHRNA4-CHRNB2 (IC(50)=1.8 uM), alpha-7/CHRNA7 (IC(50)=7 uM), and alpha-3-beta-2/CHRNA3-CHRNB2 (IC(50)=12.6 uM)). Acts as a competitive antagonist of ACh. Binds to chicken muscle-type nicotinic acetylcholine receptor (AChR) with high potency compared with the cloned human receptor. Unlike short-chain alpha-3FTxs that only bind to muscle nAChRs, this toxin utilizes dimerization to expand its pharmacological targets to block neuronal nAChRs. This chain is Fulditoxin, found in Micrurus fulvius (Eastern coral snake).